The sequence spans 327 residues: GTPase Obg (327 aa).

Residues 2–160 (HLFKDSLNLI…LNLRLELSLI (159 aa)) enclose the Obg domain. The OBG-type G domain maps to 161 to 326 (ADIGLVGLPN…LVSEFFSLVK (166 aa)). Residues 167–174 (GLPNAGKS), 192–196 (FTTKI), 213–216 (DLPG), 280–283 (SKLD), and 307–309 (SIY) contribute to the GTP site. 2 residues coordinate Mg(2+): S174 and T194.

This sequence belongs to the TRAFAC class OBG-HflX-like GTPase superfamily. OBG GTPase family. As to quaternary structure, monomer. It depends on Mg(2+) as a cofactor.

The protein resides in the cytoplasm. Functionally, an essential GTPase which binds GTP, GDP and possibly (p)ppGpp with moderate affinity, with high nucleotide exchange rates and a fairly low GTP hydrolysis rate. Plays a role in control of the cell cycle, stress response, ribosome biogenesis and in those bacteria that undergo differentiation, in morphogenesis control. This is GTPase Obg from Borrelia duttonii (strain Ly).